A 472-amino-acid polypeptide reads, in one-letter code: Tryptophan--tRNA ligase, cytoplasmic (472 aa).

In terms of domain architecture, WHEP-TRS spans 9-65; it reads SPLELFNSIATQGELVRSLKAGNASKDEIDSAVKMLLSLKMSYKAAMGEDYKANCPP. Residue K155 is modified to N6-succinyllysine. A 'HIGH' region motif is present at residues 165–174; the sequence is PSSEAMHVGH. The short motif at 350-354 is the 'KMSKS' region element; the sequence is KMSAS. S352 carries the phosphoserine modification.

Belongs to the class-I aminoacyl-tRNA synthetase family. In terms of assembly, homodimer. Interacts with oxidized form of GAPDH. Post-translationally, proteolytic cleavage generates 2 forms; T1-TrpRS and T2-TrpRS.

It is found in the cytoplasm. The catalysed reaction is tRNA(Trp) + L-tryptophan + ATP = L-tryptophyl-tRNA(Trp) + AMP + diphosphate + H(+). In terms of biological role, catalyzes the attachment of tryptophan to tRNA(Trp) in a two-step reaction: tryptophan is first activated by ATP to form Trp-AMP and then transferred to the acceptor end of the tRNA(Trp). Could also possess an angiostatic activity. This Pongo abelii (Sumatran orangutan) protein is Tryptophan--tRNA ligase, cytoplasmic (WARS1).